A 300-amino-acid chain; its full sequence is Ornithine carbamoyltransferase (300 aa).

Residues 50–53, Q77, R101, and 128–131 each bind carbamoyl phosphate; these read STRT and HPCQ. L-ornithine is bound by residues N159, D219, and 223–224; that span reads SM. Carbamoyl phosphate is bound by residues 257-258 and R285; that span reads CL.

Belongs to the aspartate/ornithine carbamoyltransferase superfamily. OTCase family.

The protein resides in the cytoplasm. The enzyme catalyses carbamoyl phosphate + L-ornithine = L-citrulline + phosphate + H(+). It functions in the pathway amino-acid degradation; L-arginine degradation via ADI pathway; carbamoyl phosphate from L-arginine: step 2/2. In terms of biological role, reversibly catalyzes the transfer of the carbamoyl group from carbamoyl phosphate (CP) to the N(epsilon) atom of ornithine (ORN) to produce L-citrulline. This is Ornithine carbamoyltransferase from Haloquadratum walsbyi (strain DSM 16790 / HBSQ001).